The chain runs to 538 residues: Putative outer membrane porin BglH (538 aa).

Positions 1-25 (MFRRNLITSAILLMAPLAFSAQSLA) are cleaved as a signal peptide. The disordered stretch occupies residues 52 to 82 (KDEEKKKYTPATVNRSVSTNDQGYAANPFPT). Positions 62–73 (ATVNRSVSTNDQ) are enriched in polar residues.

It belongs to the porin LamB (TC 1.B.3) family.

The protein resides in the cell outer membrane. In terms of biological role, may be a sugar porin with a broad carbohydrate specificity. The polypeptide is Putative outer membrane porin BglH (bglH) (Shigella flexneri serotype 5b (strain 8401)).